The primary structure comprises 427 residues: 3-phosphoshikimate 1-carboxyvinyltransferase (427 aa).

3 residues coordinate 3-phosphoshikimate: K22, S23, and R27. Residue K22 coordinates phosphoenolpyruvate. 2 residues coordinate phosphoenolpyruvate: G96 and R124. Positions 169, 170, 171, 197, 313, 336, and 340 each coordinate 3-phosphoshikimate. Q171 lines the phosphoenolpyruvate pocket. The active-site Proton acceptor is the D313. Positions 344, 386, and 411 each coordinate phosphoenolpyruvate.

The protein belongs to the EPSP synthase family. In terms of assembly, monomer.

It is found in the cytoplasm. The catalysed reaction is 3-phosphoshikimate + phosphoenolpyruvate = 5-O-(1-carboxyvinyl)-3-phosphoshikimate + phosphate. Its pathway is metabolic intermediate biosynthesis; chorismate biosynthesis; chorismate from D-erythrose 4-phosphate and phosphoenolpyruvate: step 6/7. Its function is as follows. Catalyzes the transfer of the enolpyruvyl moiety of phosphoenolpyruvate (PEP) to the 5-hydroxyl of shikimate-3-phosphate (S3P) to produce enolpyruvyl shikimate-3-phosphate and inorganic phosphate. The protein is 3-phosphoshikimate 1-carboxyvinyltransferase of Citrobacter koseri (strain ATCC BAA-895 / CDC 4225-83 / SGSC4696).